The following is a 193-amino-acid chain: dITP/XTP pyrophosphatase (193 aa).

Residue 7 to 12 participates in substrate binding; that stretch reads SENENK. The active-site Proton acceptor is D65. D65 is a binding site for Mg(2+). Residues S66, 144-147, K167, and 172-173 each bind substrate; these read FGYD and HR.

This sequence belongs to the HAM1 NTPase family. In terms of assembly, homodimer. It depends on Mg(2+) as a cofactor.

The catalysed reaction is XTP + H2O = XMP + diphosphate + H(+). It catalyses the reaction dITP + H2O = dIMP + diphosphate + H(+). It carries out the reaction ITP + H2O = IMP + diphosphate + H(+). Functionally, pyrophosphatase that catalyzes the hydrolysis of nucleoside triphosphates to their monophosphate derivatives, with a high preference for the non-canonical purine nucleotides XTP (xanthosine triphosphate), dITP (deoxyinosine triphosphate) and ITP. Seems to function as a house-cleaning enzyme that removes non-canonical purine nucleotides from the nucleotide pool, thus preventing their incorporation into DNA/RNA and avoiding chromosomal lesions. The sequence is that of dITP/XTP pyrophosphatase from Tropheryma whipplei (strain Twist) (Whipple's bacillus).